We begin with the raw amino-acid sequence, 593 residues long: Mono(ADP-ribosyl)transferase SpvB (593 aa).

The disordered stretch occupies residues 361 to 384; that stretch reads PVNNMMPPPPPPPPPMMGGNSSRP. Residues 366–376 are compositionally biased toward pro residues; that stretch reads MPPPPPPPPPM. Residues 375–578 form the TR mART core domain; it reads PMMGGNSSRP…LRLSDDATAD (204 aa). Catalysis depends on residues arginine 473, serine 503, and glutamate 540.

Belongs to the SpvB family.

The protein localises to the secreted. It carries out the reaction L-arginyl-[protein] + NAD(+) = N(omega)-(ADP-D-ribosyl)-L-arginyl-[protein] + nicotinamide + H(+). Its function is as follows. Mono-ADP-ribosylates muscle and non-muscle actin. ADP-ribosylates Chinese hamster ovary and HeLa cell actin as well as rabbit muscle, porcine heart actin and non-muscle beta- and gamma-actin. ADP-ribosylation of actin prevents the polymerization of G actin to F actin, causing actin filament depolymerization, destruction of the cytoskeleton and cytotoxicity; this requires only the C-terminal 120 residues. Does not possess NAD(+)-glycohydrolase activity, unlike most mART enzymes. The protein is Mono(ADP-ribosyl)transferase SpvB (spvB) of Salmonella dublin.